The primary structure comprises 344 residues: Lipase chaperone (344 aa).

A helical transmembrane segment spans residues 14–34 (AVVYGVVGLAAIAGVAMWSGA).

This sequence belongs to the lipase chaperone family.

It is found in the cell inner membrane. In terms of biological role, may be involved in the folding of the extracellular lipase during its passage through the periplasm. In Burkholderia cepacia (Pseudomonas cepacia), this protein is Lipase chaperone (lifO).